The following is a 418-amino-acid chain: Glutamyl-tRNA reductase (418 aa).

Residues 49–52, Ser-109, 114–116, and Gln-120 contribute to the substrate site; these read TCNR and EPQ. The active-site Nucleophile is the Cys-50. 189-194 lines the NADP(+) pocket; sequence GAGETI.

The protein belongs to the glutamyl-tRNA reductase family. As to quaternary structure, homodimer.

It carries out the reaction (S)-4-amino-5-oxopentanoate + tRNA(Glu) + NADP(+) = L-glutamyl-tRNA(Glu) + NADPH + H(+). It participates in porphyrin-containing compound metabolism; protoporphyrin-IX biosynthesis; 5-aminolevulinate from L-glutamyl-tRNA(Glu): step 1/2. Catalyzes the NADPH-dependent reduction of glutamyl-tRNA(Glu) to glutamate 1-semialdehyde (GSA). In Escherichia coli O157:H7, this protein is Glutamyl-tRNA reductase.